The primary structure comprises 355 residues: Methylthioribose-1-phosphate isomerase (355 aa).

Residues 47-49, R90, and Q197 contribute to the substrate site; that span reads RGA. D238 serves as the catalytic Proton donor. Substrate is bound at residue 248 to 249; the sequence is NK.

The protein belongs to the eIF-2B alpha/beta/delta subunits family. MtnA subfamily.

The catalysed reaction is 5-(methylsulfanyl)-alpha-D-ribose 1-phosphate = 5-(methylsulfanyl)-D-ribulose 1-phosphate. It participates in amino-acid biosynthesis; L-methionine biosynthesis via salvage pathway; L-methionine from S-methyl-5-thio-alpha-D-ribose 1-phosphate: step 1/6. Catalyzes the interconversion of methylthioribose-1-phosphate (MTR-1-P) into methylthioribulose-1-phosphate (MTRu-1-P). The chain is Methylthioribose-1-phosphate isomerase from Herpetosiphon aurantiacus (strain ATCC 23779 / DSM 785 / 114-95).